A 43-amino-acid chain; its full sequence is Protein PsbN (43 aa).

Residues 7–27 (VAIFISGLLVSFTGYALYTAF) traverse the membrane as a helical segment.

Belongs to the PsbN family.

It localises to the plastid. The protein localises to the chloroplast thylakoid membrane. Its function is as follows. May play a role in photosystem I and II biogenesis. This Daucus carota (Wild carrot) protein is Protein PsbN.